The chain runs to 272 residues: U11/U12 small nuclear ribonucleoprotein 35 kDa protein (272 aa).

One can recognise an RRM domain in the interval 51–129; that stretch reads LTLFVSRLSP…REVFVDFELE (79 aa). 2 stretches are compositionally biased toward basic and acidic residues: residues 146-162 and 190-272; these read GKKESGQLRFGGRDRPF and RDRS…EHNR. The disordered stretch occupies residues 146–272; it reads GKKESGQLRF…RKHRSDEHNR (127 aa). A coiled-coil region spans residues 221 to 258; it reads TKDDKEQNAEHTKRERSREQAKNDKDKEKKDSKRERSR.

It localises to the nucleus. This is U11/U12 small nuclear ribonucleoprotein 35 kDa protein (snrnp35) from Xenopus laevis (African clawed frog).